The primary structure comprises 350 residues: Delta(6)-protoilludene synthase STEHIDRAFT_64702 (350 aa).

Positions 89, 225, 229, and 233 each coordinate Mg(2+). Residues 89-93 (DEHSD) carry the D(D/E)XX(D/E) motif motif. Residues 225-233 (NDIVSYNIE) carry the NSE motif motif. 2 residues coordinate (2E,6E)-farnesyl diphosphate: R314 and Y315.

Belongs to the terpene synthase family. Mg(2+) is required as a cofactor. It depends on Mn(2+) as a cofactor. Ca(2+) serves as cofactor. Requires Ni(2+) as cofactor. The cofactor is Co(2+).

The enzyme catalyses (2E,6E)-farnesyl diphosphate = Delta(6)-protoilludene + diphosphate. It catalyses the reaction (2E,6E)-farnesyl diphosphate = alpha-selinene + diphosphate. With respect to regulation, ca(2+) switches the cyclization mechanism of delta(6)-protoilludene synthase from 1,11 to 1,10 cyclization which leads to the production of beta-elemene. Terpene cyclase that catalyzes the cyclization of farnesyl diphosphate (FPP) to delta(6)-protoilludene. In presence of Ca(2+), a significant switch from 1,11 to a dual 1,11/1,10 cyclization occurs, producing beta-elemene as the major product, with lower levels of delta(6)-protoilludene and (E)-beta-caryophyllene, and traces of beta-selinene and alpha-selinene. In Stereum hirsutum (strain FP-91666) (White-rot fungus), this protein is Delta(6)-protoilludene synthase STEHIDRAFT_64702.